The sequence spans 142 residues: Large ribosomal subunit protein uL11 (142 aa).

It belongs to the universal ribosomal protein uL11 family. Part of the ribosomal stalk of the 50S ribosomal subunit. Interacts with L10 and the large rRNA to form the base of the stalk. L10 forms an elongated spine to which L12 dimers bind in a sequential fashion forming a multimeric L10(L12)X complex. In terms of processing, one or more lysine residues are methylated.

Its function is as follows. Forms part of the ribosomal stalk which helps the ribosome interact with GTP-bound translation factors. This is Large ribosomal subunit protein uL11 from Bartonella tribocorum (strain CIP 105476 / IBS 506).